Reading from the N-terminus, the 1132-residue chain is Fas-binding factor 1 homolog (1132 aa).

3 disordered regions span residues 18 to 50 (DDLL…LQAS), 65 to 84 (AEDM…PQAV), and 89 to 570 (KEMD…QSYE). The span at 35-46 (AGVSSGRARGSS) shows a compositional bias: low complexity. 2 stretches are compositionally biased toward basic and acidic residues: residues 134-148 (APEK…DKKP) and 189-206 (GSER…EKDP). Acidic residues predominate over residues 226 to 235 (TFEDDDDDMM). Basic and acidic residues-rich tracts occupy residues 244 to 270 (QKGD…DELL) and 278 to 303 (ILER…PEKE). Polar residues-rich tracts occupy residues 331 to 341 (RQSVSRFSAEN) and 388 to 410 (AKTS…SKPN). Low complexity-rich tracts occupy residues 458–480 (ATST…ADSS) and 511–520 (PSDPAASSPA). Positions 534–548 (TMPSTPLQAASQLQA) are enriched in polar residues. Coiled coils occupy residues 576-727 (RAAL…TSAT), 769-882 (ARQR…LAVE), and 918-1044 (LAKE…HKKL).

It localises to the cytoplasm. Its subcellular location is the cytoskeleton. The protein localises to the microtubule organizing center. The protein resides in the centrosome. It is found in the centriole. It localises to the spindle pole. Its subcellular location is the cell junction. In terms of biological role, keratin-binding protein required for epithelial cell polarization. Required for ciliogenesis. In Gallus gallus (Chicken), this protein is Fas-binding factor 1 homolog (FBF1).